The sequence spans 496 residues: tRNA modification GTPase mss1, mitochondrial (496 aa).

The transit peptide at 1-19 directs the protein to the mitochondrion; it reads MRILNRVFLNTFQACFRRF. One can recognise a TrmE-type G domain in the interval 239-416; that stretch reads GINVAILGPS…FLQALSSTFE (178 aa). GTP is bound by residues 246 to 253, 293 to 297, and 363 to 366; these read GPSNAGKS, DTAGL, and NKVD.

It belongs to the TRAFAC class TrmE-Era-EngA-EngB-Septin-like GTPase superfamily. TrmE GTPase family.

It is found in the mitochondrion. In terms of biological role, GTPase involved in the 5-carboxymethylaminomethyl modification (mnm(5)s(2)U34) of the wobble uridine base in mitochondrial tRNAs. This chain is tRNA modification GTPase mss1, mitochondrial (mss1), found in Schizosaccharomyces pombe (strain 972 / ATCC 24843) (Fission yeast).